Consider the following 1257-residue polypeptide: Pesticidal crystal protein Cry12Aa (1257 aa).

This sequence belongs to the delta endotoxin family.

Its function is as follows. Endotoxin with nematicidal activity. The chain is Pesticidal crystal protein Cry12Aa (cry12Aa) from Bacillus thuringiensis.